Consider the following 656-residue polypeptide: CXXC-type zinc finger protein 1 (656 aa).

An N-acetylmethionine modification is found at Met-1. The segment covering 1–14 (MEGDGSDPEPPDAG) has biased composition (acidic residues). Positions 1 to 20 (MEGDGSDPEPPDAGEDSKSE) are disordered. A phosphoserine mark is found at Ser-6 and Ser-19. The PHD-type zinc-finger motif lies at 28–76 (YCICRKPDINCFMIGCDNCNEWFHGDCIRITEKMAKAIREWYCRECREK). Residues 84-162 (YRHKKSRERD…QHHQQQQQQI (79 aa)) form a disordered region. Basic and acidic residues predominate over residues 90–120 (RERDGNERDSSEPRDEGGGRKRPVPDPDLQR). Residue Ser-124 is modified to Phosphoserine. The CXXC-type zinc finger occupies 160–209 (QQIKRSARMCGECEACRRTEDCGHCDFCRDMKKFGGPNKIRQKCRLRQCQ). Positions 169, 172, 175, 181, 184, 187, 203, and 208 each coordinate Zn(2+). Disordered regions lie at residues 219–287 (FPSS…LPLD) and 311–373 (EESP…ASLP). The residue at position 224 (Ser-224) is a Phosphoserine. Thr-227 bears the Phosphothreonine mark. Residues 239 to 249 (LPTQQQPQPSQ) are compositionally biased toward low complexity. A Glycyl lysine isopeptide (Lys-Gly) (interchain with G-Cter in SUMO2) cross-link involves residue Lys-250. Positions 321–334 (RKRAVKVKHVKRRE) are enriched in basic residues. Residues 335–345 (KKSEKKKEERY) are compositionally biased toward basic and acidic residues. A compositionally biased stretch (basic residues) spans 346–358 (KRHRQKQKHKDKW). The span at 359–368 (KHPERADAKD) shows a compositional bias: basic and acidic residues. The stretch at 422–474 (AEEHGKKLLERIRREQQSARTRLQEMERRFHELEAIILRAKQQAVREDEESNE) forms a coiled coil.

As to quaternary structure, component of the SET1 complex, at least composed of the catalytic subunit (SETD1A or SETD1B), WDR5, WDR82, RBBP5, ASH2L/ASH2, CXXC1/CFP1 HCFC1 and DPY30. Interacts with SETD1A. Interacts with ZNF335. Interacts with PRDM9; this interaction does not link PRDM9-activated recombination hotspot sites with DSB machinery and is not required for the hotspot recognition pathway. Interacts with histone H3K4me3. In terms of processing, may be regulated by proteolysis. As to expression, ubiquitous.

It is found in the nucleus speckle. It localises to the nucleus. Transcriptional activator that exhibits a unique DNA binding specificity for CpG unmethylated motifs with a preference for CpGG. In Homo sapiens (Human), this protein is CXXC-type zinc finger protein 1 (CXXC1).